The chain runs to 227 residues: Phosphoribosylformylglycinamidine synthase subunit PurQ (227 aa).

The Glutamine amidotransferase type-1 domain maps to 3–225 (FAVIVFPGSN…LKQWRETYVV (223 aa)). Cysteine 86 (nucleophile) is an active-site residue. Residues histidine 194 and glutamate 196 contribute to the active site.

As to quaternary structure, part of the FGAM synthase complex composed of 1 PurL, 1 PurQ and 2 PurS subunits.

Its subcellular location is the cytoplasm. The catalysed reaction is N(2)-formyl-N(1)-(5-phospho-beta-D-ribosyl)glycinamide + L-glutamine + ATP + H2O = 2-formamido-N(1)-(5-O-phospho-beta-D-ribosyl)acetamidine + L-glutamate + ADP + phosphate + H(+). It carries out the reaction L-glutamine + H2O = L-glutamate + NH4(+). The protein operates within purine metabolism; IMP biosynthesis via de novo pathway; 5-amino-1-(5-phospho-D-ribosyl)imidazole from N(2)-formyl-N(1)-(5-phospho-D-ribosyl)glycinamide: step 1/2. Its function is as follows. Part of the phosphoribosylformylglycinamidine synthase complex involved in the purines biosynthetic pathway. Catalyzes the ATP-dependent conversion of formylglycinamide ribonucleotide (FGAR) and glutamine to yield formylglycinamidine ribonucleotide (FGAM) and glutamate. The FGAM synthase complex is composed of three subunits. PurQ produces an ammonia molecule by converting glutamine to glutamate. PurL transfers the ammonia molecule to FGAR to form FGAM in an ATP-dependent manner. PurS interacts with PurQ and PurL and is thought to assist in the transfer of the ammonia molecule from PurQ to PurL. This is Phosphoribosylformylglycinamidine synthase subunit PurQ from Bacillus cereus (strain Q1).